The chain runs to 1107 residues: Unconventional myosin-Ie (1107 aa).

Positions 19 to 692 constitute a Myosin motor domain; the sequence is SGVDDMVLLS…SLFLLEEMRE (674 aa). Residue 112 to 119 participates in ATP binding; it reads GESGAGKT. The tract at residues 581–591 is actin-binding; the sequence is PHYIRCIKPNE. The 30-residue stretch at 695-724 folds into the IQ domain; it reads YDGYARVIQKTWRKFVARKKYVQMREEASD. One can recognise a TH1 domain in the interval 730–922; it reads KERRRNSINR…NKVLQVSIGP (193 aa). The tract at residues 919 to 1052 is disordered; sequence SIGPGLPKNS…KPQPKPKPQV (134 aa). Polar residues-rich tracts occupy residues 979 to 989 and 998 to 1012; these read NQRSNQKSLYT and RQQS…QTPE. Residue serine 1001 is modified to Phosphoserine. The segment covering 1034–1051 has biased composition (pro residues); the sequence is RPPPAGGRPKPQPKPKPQ. One can recognise an SH3 domain in the interval 1050-1107; it reads PQVPQCKALYAYDAQDTDELSFNANDIIDIIKEDPSGWWTGRLRGKQGLFPNNYVTKI.

The protein belongs to the TRAFAC class myosin-kinesin ATPase superfamily. Myosin family. In terms of assembly, interacts with CALM and F-actin. Interacts (via SH3 domain) with SYNJ1, DNM1 and DNM2. Interacts with ARL14EP. Interacts with CARMIL1. Detected in kidney glomeruli (at protein level). Detected in utricle.

Its subcellular location is the cytoplasm. It localises to the cell junction. The protein localises to the cytoplasmic vesicle. It is found in the clathrin-coated vesicle. The protein resides in the cytoskeleton. Functionally, myosins are actin-based motor molecules with ATPase activity. Unconventional myosins serve in intracellular movements. Their highly divergent tails bind to membranous compartments, which are then moved relative to actin filaments. Binds to membranes containing anionic phospholipids via its tail domain. Involved in clathrin-mediated endocytosis and intracellular movement of clathrin-coated vesicles. Required for normal morphology of the glomerular basement membrane, normal development of foot processes by kidney podocytes and normal kidney function. In dendritic cells, may control the movement of class II-containing cytoplasmic vesicles along the actin cytoskeleton by connecting them with the actin network via ARL14EP and ARL14. The sequence is that of Unconventional myosin-Ie (Myo1e) from Mus musculus (Mouse).